Reading from the N-terminus, the 363-residue chain is DNA replication and repair protein RecF (363 aa).

31–38 (GANSSGKT) is a binding site for ATP.

The protein belongs to the RecF family.

It localises to the cytoplasm. Its function is as follows. The RecF protein is involved in DNA metabolism; it is required for DNA replication and normal SOS inducibility. RecF binds preferentially to single-stranded, linear DNA. It also seems to bind ATP. This Nitrosococcus oceani (strain ATCC 19707 / BCRC 17464 / JCM 30415 / NCIMB 11848 / C-107) protein is DNA replication and repair protein RecF.